Consider the following 316-residue polypeptide: Methionyl-tRNA formyltransferase (316 aa).

Ser-109–Pro-112 provides a ligand contact to (6S)-5,6,7,8-tetrahydrofolate.

This sequence belongs to the Fmt family.

It catalyses the reaction L-methionyl-tRNA(fMet) + (6R)-10-formyltetrahydrofolate = N-formyl-L-methionyl-tRNA(fMet) + (6S)-5,6,7,8-tetrahydrofolate + H(+). Its function is as follows. Attaches a formyl group to the free amino group of methionyl-tRNA(fMet). The formyl group appears to play a dual role in the initiator identity of N-formylmethionyl-tRNA by promoting its recognition by IF2 and preventing the misappropriation of this tRNA by the elongation apparatus. The protein is Methionyl-tRNA formyltransferase of Nitrosomonas eutropha (strain DSM 101675 / C91 / Nm57).